A 242-amino-acid polypeptide reads, in one-letter code: Glutathione S-transferase 3 (242 aa).

The region spanning 1-79 (MIVLHHLKNS…HLVRKYGPSF (79 aa)) is the GST N-terminal domain. The region spanning 85 to 234 (DVAELEKYEL…ERYSHPPTPP (150 aa)) is the GST C-terminal domain. A Phosphoserine modification is found at serine 228. Threonine 232 bears the Phosphothreonine mark.

Belongs to the GST superfamily. As to quaternary structure, interacts with sad1.

It localises to the cytoplasm. The catalysed reaction is RX + glutathione = an S-substituted glutathione + a halide anion + H(+). In terms of biological role, may have a role in the detoxification of various heavy metals. The chain is Glutathione S-transferase 3 (gst3) from Schizosaccharomyces pombe (strain 972 / ATCC 24843) (Fission yeast).